We begin with the raw amino-acid sequence, 426 residues long: Probable auxin efflux carrier component 9 (426 aa).

The Extracellular segment spans residues 1–6; it reads MITGSE. A helical membrane pass occupies residues 7-27; that stretch reads VYQVVEAMAPLYTAAALGYGS. At 28–38 the chain is on the cytoplasmic side; sequence VRWLKAFSNEQ. A helical transmembrane segment spans residues 39–59; sequence CAGINHFVALYAVPVLIFDMV. Val51 provides a ligand contact to (indol-3-yl)acetate. The Extracellular segment spans residues 60 to 70; that stretch reads STNNVYKMNGR. A helical membrane pass occupies residues 71–91; sequence LIAADTLQKAVLLLGLMAWAL. Over 92–114 the chain is Cytoplasmic; that stretch reads WERSRARGAGAKAKAAVSSPLQW. Residues 115–135 form a helical membrane-spanning segment; that stretch reads VITCFSVASLPNTIIMGVPLL. Positions 126 and 128 each coordinate (indol-3-yl)acetate. Over 136-145 the chain is Extracellular; the sequence is NGMYGPVSKD. The chain crosses the membrane as a helical span at residues 146-166; sequence LMKQIVVMQFCIWYNVIIFLY. Tyr159 is a (indol-3-yl)acetate binding site. The Cytoplasmic segment spans residues 167-286; the sequence is EYMAARRSAS…LLQIPNTYAS (120 aa). A disordered region spans residues 232-258; sequence RDGVSGETTAAAKEVSSGEVAPVEEEE. A helical transmembrane segment spans residues 287-307; sequence FLGLIWSLIAFKCGFSMPKIV. Residues 308–310 are Extracellular-facing; the sequence is EDS. A helical membrane pass occupies residues 311 to 331; the sequence is LFTIRTTAVGLSMFSSGTFIA. Residues 332–347 lie on the Cytoplasmic side of the membrane; it reads RQSRFVPCGYKIASFS. The helical transmembrane segment at 348–368 threads the bilayer; the sequence is MVIKFLIGPVVMLFASLVIGM. Residues 369-371 lie on the Extracellular side of the membrane; the sequence is HGT. The chain crosses the membrane as a helical span at residues 372–392; that stretch reads LLHIAVVQAALPLAVTSFVYA. Val386 provides a ligand contact to (indol-3-yl)acetate. Residues 393–405 are Cytoplasmic-facing; sequence EEYKVHADIMSTG. The chain crosses the membrane as a helical span at residues 406–426; it reads VILGIFISLPVTIVYYILLGL.

The protein belongs to the auxin efflux carrier (TC 2.A.69.1) family. Homodimer. In terms of tissue distribution, expressed in roots, leaves and shoot apex. Expressed in roots, stem bases, stems, leaves and young panicles.

It is found in the membrane. May act as a component of the auxin efflux carrier. The protein is Probable auxin efflux carrier component 9 of Oryza sativa subsp. japonica (Rice).